The primary structure comprises 227 residues: MHLSLTPQWSSWTVLLLLVSNLLLWENTASAMRAKRLNVHDYTTFGNTWNQAIQLSQSMNHRISELSTHFKVFYAQGRGFEKRTTRCHTSSLSSPENKEQAQKIQLEVLLGLAHSLLQAWVNPLYHLWAEMCERLGSTPPILSKALEVKTLNRNLLETIEKIAFKGNFEINENGNYTAWSELELLQSPNRDTRYFAFHNLFHCLKKDSSHVEMYLKLLKCRLIQSNC.

The N-terminal stretch at 1-31 (MHLSLTPQWSSWTVLLLLVSNLLLWENTASA) is a signal peptide. 2 cysteine pairs are disulfide-bonded: Cys87–Cys203 and Cys220–Cys227. N-linked (GlcNAc...) asparagine glycosylation is present at Asn175.

Belongs to the somatotropin/prolactin family. As to expression, expressed specifically in placenta. Expressed in both trophoblast giant cells and spongiotrophoblast cells.

It is found in the secreted. In Mus musculus (Mouse), this protein is Prolactin-4A1 (Prl4a1).